Reading from the N-terminus, the 165-residue chain is Chorismate pyruvate-lyase (165 aa).

Substrate is bound by residues Met-35, Arg-77, Leu-115, and Glu-156.

Belongs to the UbiC family. In terms of assembly, monomer.

It localises to the cytoplasm. It carries out the reaction chorismate = 4-hydroxybenzoate + pyruvate. It participates in cofactor biosynthesis; ubiquinone biosynthesis. Removes the pyruvyl group from chorismate, with concomitant aromatization of the ring, to provide 4-hydroxybenzoate (4HB) for the ubiquinone pathway. In Enterobacter sp. (strain 638), this protein is Chorismate pyruvate-lyase.